The primary structure comprises 594 residues: Capsid vertex component 1 (594 aa).

Disordered stretches follow at residues 52–77, 176–205, 443–468, and 575–594; these read GRST…DAVG, NKRD…NGSD, ARRQ…SGPP, and GRQE…FDDL. Residues 61-76 are compositionally biased toward acidic residues; the sequence is GDEDDAPASDDAEDAV.

Belongs to the herpesviridae CVC1 protein family. In terms of assembly, interacts (via C-terminus) with capsid vertex component 2/CVC2.

The protein localises to the virion. Its subcellular location is the host nucleus. Its function is as follows. Capsid vertex-specific component that plays a role during viral DNA encapsidation, assuring correct genome cleavage and presumably stabilizing capsids that contain full-length viral genomes. This Homo sapiens (Human) protein is Capsid vertex component 1.